The sequence spans 740 residues: Cell death abnormality protein 12 (740 aa).

Residues 348–494 (SEIQKVLDID…FVLEQLRHVL (147 aa)) enclose the ELMO domain. Residues 555-690 (INHLNYLKKG…ESLAYLVGNT (136 aa)) are required for punctate localization, cell corpse engulfment and distal cell tip migration. The SH3-binding motif lies at 724-727 (PDVP).

In terms of assembly, interacts with psr-1. Forms a ternary complex with ced-2 and ced-5.

It localises to the cytoplasm. In terms of biological role, involved in apoptosis and necrosis. Required for the cell corpse engulfment process. Has roles in the formation of actin halos and distal tip cell migration. Plays no role in amphid axon outgrowth. This is Cell death abnormality protein 12 from Caenorhabditis briggsae.